The chain runs to 350 residues: Ceramide synthase 1 (350 aa).

Ala2 carries the N-acetylalanine modification. Helical transmembrane passes span 53–73 (AHLAAPELLLAVLCALGWTAL), 103–123 (AWKLLFYLACWSYCAYLLLGT), 148–168 (IAVAYLLQGSFYCHSIYATVY), 176–196 (SVVMLVHHVVTLLLIASSYAF), 239–259 (VANLGCLSFCFCWFWFRLYWF), and 287–307 (LLLLLMVMNIYWFLYIVAFAA). In terms of domain architecture, TLC spans 97 to 311 (ARLPESAWKL…IVAFAAKVLT (215 aa)).

In terms of processing, acetylated. Deacetylation by SIRT3 increases enzyme activity and promotes mitochondrial ceramide accumulation. As to expression, expressed in brain, skeletal muscle, heart and perigonadal white adipose tissue.

It is found in the endoplasmic reticulum membrane. It catalyses the reaction a sphingoid base + octadecanoyl-CoA = an N-octadecanoyl-sphingoid base + CoA + H(+). It carries out the reaction sphinganine + octadecanoyl-CoA = N-(octadecanoyl)-sphinganine + CoA + H(+). The catalysed reaction is hexadecasphinganine + octadecanoyl-CoA = N-octadecanoylhexadecasphinganine + CoA + H(+). The enzyme catalyses sphing-4-enine + octadecanoyl-CoA = N-octadecanoylsphing-4-enine + CoA + H(+). It catalyses the reaction heptadecasphing-4-enine + octadecanoyl-CoA = N-octadecanoyl-heptadecasphing-4-enine + CoA + H(+). It carries out the reaction 2-hydroxyoctadecanoyl-CoA + sphinganine = N-(2-hydroxyoctadecanoyl)-sphinganine + CoA + H(+). The catalysed reaction is eicosanoyl-CoA + sphinganine = N-eicosanoylsphinganine + CoA + H(+). It functions in the pathway lipid metabolism; sphingolipid metabolism. Inhibited by fumonisin B1. In terms of biological role, ceramide synthase that catalyzes the transfer of the acyl chain from acyl-CoA to a sphingoid base, with high selectivity toward stearoyl-CoA (octadecanoyl-CoA; C18:0-CoA). N-acylates sphinganine and sphingosine bases to form dihydroceramides and ceramides in de novo synthesis and salvage pathways, respectively. Plays a predominant role in skeletal muscle in regulating C18 ceramide and dihydroceramide levels with an impact on whole-body glucose metabolism and insulin sensitivity. Protects from diet-induced obesity by suppressing the uptake of glucose in multiple organs in a FGF21-dependent way. Generates C18 ceramides in the brain, playing a critical role in cerebellar development and Purkinje cell function. In response to cellular stress mediates mitophagy, a known defense mechanism against cell transformation and aging. Upon mitochondria fission, generates C18 ceramides that anchor lipidated MAP1LC3B/LC3B-II autophagolysosomes to outer mitochondrial membranes to eliminate damaged mitochondria. The protein is Ceramide synthase 1 of Mus musculus (Mouse).